The sequence spans 143 residues: uncharacterized protein (143 aa).

Residues 111-143 (VTQDISHTSGKSPTPKAKSSSPKKSKKKNWIPL) form a disordered region. A compositionally biased stretch (low complexity) spans 119-130 (SGKSPTPKAKSS). A compositionally biased stretch (basic residues) spans 131–143 (SPKKSKKKNWIPL).

The protein belongs to the chlamydial CPn_0742/CT_635/TC_0003 family.

This is an uncharacterized protein from Chlamydia muridarum (strain MoPn / Nigg).